The primary structure comprises 134 residues: Small ribosomal subunit protein uS11 (134 aa).

Belongs to the universal ribosomal protein uS11 family. In terms of assembly, part of the 30S ribosomal subunit. Interacts with proteins S7 and S18. Binds to IF-3.

Located on the platform of the 30S subunit, it bridges several disparate RNA helices of the 16S rRNA. Forms part of the Shine-Dalgarno cleft in the 70S ribosome. The sequence is that of Small ribosomal subunit protein uS11 from Polaromonas naphthalenivorans (strain CJ2).